We begin with the raw amino-acid sequence, 344 residues long: MIKILGIESSCDDTAVSIITENREILSNIIISQNTEHTVFGGVVPEIAARSHLSHLDKALKNVLKESNTKLTDISTIAATSGPGLIGSVIVGSMFARSLSSALKKPFIAINHLEGHALTARLTDNIPYPYLLLLASGGHCQFVAVLGLGKYKILGSTIDDAVGEAFDKVAKMLNLAFPGGPEIEKRATLGDPNKYKFPKPIINSGNCNMSFSGLKTAVRTLIMNLKEINDTVINDIAASFQFTIGEILSSKVQDAIRAYEQITNNFDKKNIVIAGGVAANKYLQEILSSCAKTYGYRLIYPPIHLCTDNAAMIAYAGLERYNNKLFTPLNFCPKARWSLEDISN.

Residues H112 and H116 each contribute to the Fe cation site. Residues 134 to 138 (LASGG), D167, G180, and N280 contribute to the substrate site. D308 is a binding site for Fe cation.

Belongs to the KAE1 / TsaD family. The cofactor is Fe(2+).

The protein localises to the cytoplasm. The catalysed reaction is L-threonylcarbamoyladenylate + adenosine(37) in tRNA = N(6)-L-threonylcarbamoyladenosine(37) in tRNA + AMP + H(+). In terms of biological role, required for the formation of a threonylcarbamoyl group on adenosine at position 37 (t(6)A37) in tRNAs that read codons beginning with adenine. Is involved in the transfer of the threonylcarbamoyl moiety of threonylcarbamoyl-AMP (TC-AMP) to the N6 group of A37, together with TsaE and TsaB. TsaD likely plays a direct catalytic role in this reaction. The polypeptide is tRNA N6-adenosine threonylcarbamoyltransferase (Rickettsia massiliae (strain Mtu5)).